A 497-amino-acid polypeptide reads, in one-letter code: C4-dicarboxylate transport protein (497 aa).

8 helical membrane-spanning segments follow: residues 27-45 (LYVQ…GYFY), 60-82 (IMLV…IAGM), 95-117 (AMIY…ANVV), 168-185 (ILQV…LAIV), 205-227 (RLVA…FTIG), 237-259 (LAML…LGAV), 348-370 (ILLL…AGFI), and 374-393 (ATLS…ILGI). A disordered region spans residues 466–497 (ADRTLAGRPGGRDSRRIAPDHSAQVFGGPLSL). Over residues 475 to 484 (GGRDSRRIAP) the composition is skewed to basic and acidic residues.

The protein belongs to the dicarboxylate/amino acid:cation symporter (DAACS) (TC 2.A.23) family.

The protein resides in the cell inner membrane. Responsible for the transport of dicarboxylates such as succinate, fumarate, and malate from the periplasm across the inner membrane. This transport system plays an essential role in the energy supply of tropical rhizobium-legume symbionts. The chain is C4-dicarboxylate transport protein (dctA1) from Sinorhizobium fredii (strain NBRC 101917 / NGR234).